The sequence spans 385 residues: WD repeat-containing protein 74 (385 aa).

6 WD repeats span residues 40 to 80 (RREE…FQGQ), 83 to 122 (CPGGEGMFRGLAQADGTLITCVDSGILRVWHDKDKDTSSD), 128 to 168 (RVGP…EPVF), 179 to 220 (DLRV…RRPV), 224 to 266 (TYGE…GCLK), and 267 to 306 (GLAGSVRGLQCHPSKPLLASCGLDRVLRIHRIQNPRGLEH). Serine 214 carries the phosphoserine modification. Lysine 311 is modified (N6-methyllysine). Residues 320–385 (SGRDNWEDEP…KKKRPGSTSP (66 aa)) are required for nucleolar and nuclear location. Disordered regions lie at residues 323–345 (DNWEDEPQEPQEPNKVPLEDTET) and 360–385 (LSGLEQPQGALQTRRRKKKRPGSTSP). At serine 361 the chain carries Phosphoserine. Residues 372–385 (TRRRKKKRPGSTSP) show a composition bias toward basic residues.

Isoform 1 interacts (through WDR repeats) with NVL; the interaction is independent of RNA or pre-60S ribosome particles. Isoform 2 does not interact with NVL. Interacts with MTREX; the interaction dissociation in a late stage of rRNA synthesis is required for appropriate maturation of pre-60S particles and depends on the ATPase activity of NVL.

Its subcellular location is the nucleus. It is found in the nucleolus. Regulatory protein of the MTREX-exosome complex involved in the synthesis of the 60S ribosomal subunit. Participates in an early cleavage of the pre-rRNA processing pathway in cooperation with NVL. Required for blastocyst formation, is necessary for RNA transcription, processing and/or stability during preimplantation development. The protein is WD repeat-containing protein 74 (WDR74) of Homo sapiens (Human).